The following is a 362-amino-acid chain: Probable S-adenosylmethionine-dependent methyltransferase At5g37990 (362 aa).

The S-adenosyl-L-homocysteine site is built by Tyr19, Cys66, Asn71, Asp107, Ser136, and Phe137. Residues Asn175, Glu261, and Phe263 each coordinate Mg(2+).

Belongs to the methyltransferase superfamily. Type-7 methyltransferase family. In terms of assembly, homodimer. The cofactor is Mg(2+).

In Arabidopsis thaliana (Mouse-ear cress), this protein is Probable S-adenosylmethionine-dependent methyltransferase At5g37990.